Reading from the N-terminus, the 330-residue chain is uncharacterized protein (330 aa).

Residue His-257 is part of the active site.

The protein belongs to the IUNH family.

This is an uncharacterized protein from Schizosaccharomyces pombe (strain 972 / ATCC 24843) (Fission yeast).